The following is a 287-amino-acid chain: Shikimate dehydrogenase (NADP(+)) (287 aa).

Shikimate contacts are provided by residues serine 20 to serine 22 and threonine 67. Lysine 71 serves as the catalytic Proton acceptor. An NADP(+)-binding site is contributed by glutamate 84. Residues asparagine 93 and aspartate 108 each coordinate shikimate. Residues glycine 132 to alanine 136, asparagine 156 to arginine 161, and methionine 226 each bind NADP(+). Tyrosine 228 lines the shikimate pocket. Position 250 (glycine 250) interacts with NADP(+).

It belongs to the shikimate dehydrogenase family. In terms of assembly, homodimer.

The catalysed reaction is shikimate + NADP(+) = 3-dehydroshikimate + NADPH + H(+). The protein operates within metabolic intermediate biosynthesis; chorismate biosynthesis; chorismate from D-erythrose 4-phosphate and phosphoenolpyruvate: step 4/7. Its function is as follows. Involved in the biosynthesis of the chorismate, which leads to the biosynthesis of aromatic amino acids. Catalyzes the reversible NADPH linked reduction of 3-dehydroshikimate (DHSA) to yield shikimate (SA). The polypeptide is Shikimate dehydrogenase (NADP(+)) (Bordetella bronchiseptica (strain ATCC BAA-588 / NCTC 13252 / RB50) (Alcaligenes bronchisepticus)).